Reading from the N-terminus, the 89-residue chain is Gallinacin-13 (89 aa).

A signal peptide spans 1-23 (MRILQLLFAIVVILLLQDAPARG). 3 disulfides stabilise this stretch: Cys-30-Cys-58, Cys-37-Cys-51, and Cys-41-Cys-59. The tract at residues 66-89 (PFSNPKHSVLHTAEQDPSPSLGGT) is disordered.

This sequence belongs to the beta-defensin family. As to expression, expressed in the liver, gall bladder, kidney, small intestine, spleen, testis, ovary and male and female reproductive tracts. Not detected in the ovarian stroma and the theca and granulosa layers of the ovarian follicle.

Its subcellular location is the secreted. It is found in the cytoplasmic granule. Functionally, has bactericidal activity. Potent activity against E.coli, L.monocytogenes, S.typhimurium and S.pyogenes but mot against S.aureus. In terms of biological role, has bactericidal activity. This is Gallinacin-13 (GAL13) from Gallus gallus (Chicken).